A 483-amino-acid polypeptide reads, in one-letter code: Probable cytosol aminopeptidase (483 aa).

Mn(2+) is bound by residues K245 and D250. Residue K257 is part of the active site. 3 residues coordinate Mn(2+): D268, D327, and E329. The active site involves R331.

Belongs to the peptidase M17 family. It depends on Mn(2+) as a cofactor.

The protein localises to the cytoplasm. The enzyme catalyses Release of an N-terminal amino acid, Xaa-|-Yaa-, in which Xaa is preferably Leu, but may be other amino acids including Pro although not Arg or Lys, and Yaa may be Pro. Amino acid amides and methyl esters are also readily hydrolyzed, but rates on arylamides are exceedingly low.. It catalyses the reaction Release of an N-terminal amino acid, preferentially leucine, but not glutamic or aspartic acids.. Its function is as follows. Presumably involved in the processing and regular turnover of intracellular proteins. Catalyzes the removal of unsubstituted N-terminal amino acids from various peptides. This chain is Probable cytosol aminopeptidase, found in Wolinella succinogenes (strain ATCC 29543 / DSM 1740 / CCUG 13145 / JCM 31913 / LMG 7466 / NCTC 11488 / FDC 602W) (Vibrio succinogenes).